The chain runs to 124 residues: ATP synthase epsilon chain (124 aa).

The protein belongs to the ATPase epsilon chain family. As to quaternary structure, F-type ATPases have 2 components, CF(1) - the catalytic core - and CF(0) - the membrane proton channel. CF(1) has five subunits: alpha(3), beta(3), gamma(1), delta(1), epsilon(1). CF(0) has three main subunits: a, b and c.

It is found in the cell membrane. Functionally, produces ATP from ADP in the presence of a proton gradient across the membrane. This chain is ATP synthase epsilon chain, found in Corynebacterium glutamicum (strain ATCC 13032 / DSM 20300 / JCM 1318 / BCRC 11384 / CCUG 27702 / LMG 3730 / NBRC 12168 / NCIMB 10025 / NRRL B-2784 / 534).